We begin with the raw amino-acid sequence, 800 residues long: U4/U6.U5 tri-snRNP-associated protein 1 (800 aa).

Residues 1 to 120 (MGSSKKHRGE…SSGDASSLSI (120 aa)) are disordered. A compositionally biased stretch (basic residues) spans 32–42 (HREHKKHKHRS). Residues 58–101 (ERGGERGSGRRGAEAEARSSTHGRERSQAEPSERRVKREKRDDG) show a composition bias toward basic and acidic residues. A compositionally biased stretch (low complexity) spans 104 to 119 (AAASSKTSSGDASSLS). Residues Lys-125 and Lys-133 each participate in a glycyl lysine isopeptide (Lys-Gly) (interchain with G-Cter in SUMO2) cross-link. A Glycyl lysine isopeptide (Lys-Gly) (interchain with G-Cter in SUMO1); alternate cross-link involves residue Lys-141. Lys-141 participates in a covalent cross-link: Glycyl lysine isopeptide (Lys-Gly) (interchain with G-Cter in SUMO2); alternate. Residues Lys-147 and Lys-188 each participate in a glycyl lysine isopeptide (Lys-Gly) (interchain with G-Cter in SUMO2) cross-link. Residues 157 to 231 (NPMALRQREE…KLLEEMDQEF (75 aa)) adopt a coiled-coil conformation. Residue Thr-189 is modified to Phosphothreonine. Lys-277 is covalently cross-linked (Glycyl lysine isopeptide (Lys-Gly) (interchain with G-Cter in SUMO2)). Residues 311–330 (PDYLPYAEDESVDDLAQQKP) are disordered. A Phosphoserine modification is found at Ser-321. Glycyl lysine isopeptide (Lys-Gly) (interchain with G-Cter in SUMO2) cross-links involve residues Lys-329 and Lys-336. Residue Ser-348 is modified to Phosphoserine. Thr-392 carries the post-translational modification Phosphothreonine. Glycyl lysine isopeptide (Lys-Gly) (interchain with G-Cter in SUMO2) cross-links involve residues Lys-400 and Lys-414. Positions 419–497 (RADDLLPLGD…QVLEEDEAEL (79 aa)) are disordered. Thr-430 carries the phosphothreonine modification. 4 positions are modified to phosphoserine: Ser-448, Ser-474, Ser-486, and Ser-521. The stretch at 490–533 (LEEDEAELELQKQLEKGRRLRQLQQLQQLRDSGEKVVEIVKKLE) forms a coiled coil. Residue Lys-548 forms a Glycyl lysine isopeptide (Lys-Gly) (interchain with G-Cter in SUMO2) linkage. The interval 571–604 (LAGNREEQEELMDFERDEERSANGGSESDGEENI) is disordered. Phosphoserine is present on residues Ser-591, Ser-596, Ser-598, and Ser-621. Glycyl lysine isopeptide (Lys-Gly) (interchain with G-Cter in SUMO2) cross-links involve residues Lys-648, Lys-657, and Lys-684. At Thr-695 the chain carries Phosphothreonine. Glycyl lysine isopeptide (Lys-Gly) (interchain with G-Cter in SUMO2) cross-links involve residues Lys-699, Lys-709, Lys-723, Lys-749, and Lys-758. A Phosphoserine modification is found at Ser-761. A Phosphothreonine modification is found at Thr-764. Glycyl lysine isopeptide (Lys-Gly) (interchain with G-Cter in SUMO2) cross-links involve residues Lys-775 and Lys-780. Residue Ser-789 is modified to Phosphoserine. Lys-791 is covalently cross-linked (Glycyl lysine isopeptide (Lys-Gly) (interchain with G-Cter in SUMO2)).

Belongs to the SNU66/SART1 family. Identified in the spliceosome C complex. Component of the U4/U6-U5 tri-snRNP complex composed of the U4, U6 and U5 snRNAs and at least PRPF3, PRPF4, PRPF6, PRPF8, PRPF31, SNRNP200, TXNL4A, SNRNP40, DDX23, CD2BP2, PPIH, SNU13, EFTUD2, SART1 and USP39. Interacts with UBL5. Interacts with IVNS1ABP (via Kelch repeats). Sumoylated with SUMO2. In terms of tissue distribution, ubiquitously expressed.

Its subcellular location is the nucleus. Functionally, plays a role in mRNA splicing as a component of the U4/U6-U5 tri-snRNP, one of the building blocks of the spliceosome. May also bind to DNA. The chain is U4/U6.U5 tri-snRNP-associated protein 1 (SART1) from Homo sapiens (Human).